The primary structure comprises 751 residues: Putative tyrosine-protein kinase EpsB (751 aa).

Residues 1-31 lie on the Cytoplasmic side of the membrane; the sequence is MTQNLSQPPAVNAPESELDLVRYLDVLVANR. The helical transmembrane segment at 32-52 threads the bilayer; it reads WLIAGIAAVVMLLGATYAFLA. Residues 53 to 444 lie on the Periplasmic side of the membrane; that stretch reads RPVYEADVLV…VPEEPVKPKK (392 aa). A helical transmembrane segment spans residues 445 to 465; the sequence is LTVTALAGVLGVVLGVVAAFV. Over 466 to 751 the chain is Cytoplasmic; sequence RNTLFGGITE…PSAEAEAESA (286 aa).

It belongs to the etk/wzc family.

The protein resides in the cell inner membrane. It carries out the reaction L-tyrosyl-[protein] + ATP = O-phospho-L-tyrosyl-[protein] + ADP + H(+). Functionally, probably involved in polymerization and/or export of exopolysaccharide EPS I which functions as a virulence factor. May be involved in an ATP-dependent process in the pathway for EPS I production, possibly export of the trimeric repeat units across the inner membrane or their polymerization. This is Putative tyrosine-protein kinase EpsB (epsB) from Ralstonia nicotianae (strain ATCC BAA-1114 / GMI1000) (Ralstonia solanacearum).